The sequence spans 72 residues: V-type proton ATPase subunit e (72 aa).

At 1-2 (MS) the chain is on the lumenal side. A helical transmembrane segment spans residues 3–23 (FYTVVATFLSVVLASAVFWVL). Residues 24 to 34 (APKENQTVWRS) are Cytoplasmic-facing. Residues 35–55 (TIILSMSMMFLMWAVTYLSQL) traverse the membrane as a helical segment. Topologically, residues 56–72 (HPLVVPRRSDLRPEFAE) are lumenal.

Belongs to the V-ATPase e1/e2 subunit family. In terms of assembly, V-ATPase is a heteromultimeric enzyme composed of a peripheral catalytic V1 complex (components A to H) attached to an integral membrane V0 proton pore complex (components: a, c, c', c'', d, e, f and VOA1).

Its subcellular location is the vacuole membrane. Subunit of the V0 complex of vacuolar(H+)-ATPase (V-ATPase), a multisubunit enzyme composed of a peripheral complex (V1) that hydrolyzes ATP and a membrane integral complex (V0) that translocates protons. V-ATPase is responsible for acidifying and maintaining the pH of intracellular compartments. The polypeptide is V-type proton ATPase subunit e (VMA9) (Eremothecium gossypii (strain ATCC 10895 / CBS 109.51 / FGSC 9923 / NRRL Y-1056) (Yeast)).